Here is an 80-residue protein sequence, read N- to C-terminus: Acyl carrier protein (80 aa).

In terms of domain architecture, Carrier spans 4–79; that stretch reads DEVKGQVYDI…DAINYIVEKK (76 aa). Position 39 is an O-(pantetheine 4'-phosphoryl)serine (Ser-39).

This sequence belongs to the acyl carrier protein (ACP) family. 4'-phosphopantetheine is transferred from CoA to a specific serine of apo-ACP by AcpS. This modification is essential for activity because fatty acids are bound in thioester linkage to the sulfhydryl of the prosthetic group.

The protein resides in the cytoplasm. Its pathway is lipid metabolism; fatty acid biosynthesis. Functionally, carrier of the growing fatty acid chain in fatty acid biosynthesis. This chain is Acyl carrier protein, found in Chloroherpeton thalassium (strain ATCC 35110 / GB-78).